A 154-amino-acid polypeptide reads, in one-letter code: Myoglobin (154 aa).

A Globin domain is found at 2–148 (GLSDGEWQLV…FRNDMAAKYK (147 aa)). A Phosphoserine modification is found at Ser4. His65 serves as a coordination point for nitrite. Residue His65 participates in O2 binding. Phosphothreonine is present on Thr68. His94 serves as a coordination point for heme b.

Belongs to the globin family. Monomeric.

It localises to the cytoplasm. Its subcellular location is the sarcoplasm. The catalysed reaction is Fe(III)-heme b-[protein] + nitric oxide + H2O = Fe(II)-heme b-[protein] + nitrite + 2 H(+). The enzyme catalyses H2O2 + AH2 = A + 2 H2O. In terms of biological role, monomeric heme protein which primary function is to store oxygen and facilitate its diffusion within muscle tissues. Reversibly binds oxygen through a pentacoordinated heme iron and enables its timely and efficient release as needed during periods of heightened demand. Depending on the oxidative conditions of tissues and cells, and in addition to its ability to bind oxygen, it also has a nitrite reductase activity whereby it regulates the production of bioactive nitric oxide. Under stress conditions, like hypoxia and anoxia, it also protects cells against reactive oxygen species thanks to its pseudoperoxidase activity. The sequence is that of Myoglobin (MB) from Sus scrofa (Pig).